A 699-amino-acid polypeptide reads, in one-letter code: DNA ligase (699 aa).

Residues 47–51 (DAQYD), 96–97 (SL), and Glu128 each bind NAD(+). The active-site N6-AMP-lysine intermediate is Lys130. NAD(+)-binding residues include Arg151, Glu186, Lys303, and Lys327. Zn(2+)-binding residues include Cys422, Cys425, Cys440, and Cys446. A BRCT domain is found at 620–699 (GDNLLLSNQT…EEWIKMVNEL (80 aa)).

Belongs to the NAD-dependent DNA ligase family. LigA subfamily. It depends on Mg(2+) as a cofactor. Requires Mn(2+) as cofactor.

It carries out the reaction NAD(+) + (deoxyribonucleotide)n-3'-hydroxyl + 5'-phospho-(deoxyribonucleotide)m = (deoxyribonucleotide)n+m + AMP + beta-nicotinamide D-nucleotide.. Functionally, DNA ligase that catalyzes the formation of phosphodiester linkages between 5'-phosphoryl and 3'-hydroxyl groups in double-stranded DNA using NAD as a coenzyme and as the energy source for the reaction. It is essential for DNA replication and repair of damaged DNA. This Orientia tsutsugamushi (strain Ikeda) (Rickettsia tsutsugamushi) protein is DNA ligase.